Consider the following 2922-residue polypeptide: Small ribosomal subunit protein uS4c (2922 aa).

In terms of domain architecture, S4 RNA-binding spans 111-174 (MRLDNIVFRL…ISMELVSRFL (64 aa)).

This sequence belongs to the universal ribosomal protein uS4 family. In terms of assembly, part of the 30S ribosomal subunit. Contacts protein S5. The interaction surface between S4 and S5 is involved in control of translational fidelity.

Its subcellular location is the plastid. It localises to the chloroplast. In terms of biological role, one of the primary rRNA binding proteins, it binds directly to 16S rRNA where it nucleates assembly of the body of the 30S subunit. With S5 and S12 plays an important role in translational accuracy. The sequence is that of Small ribosomal subunit protein uS4c (rps4) from Stigeoclonium helveticum (Green alga).